The sequence spans 145 residues: Transcriptional regulator SlyA (145 aa).

An HTH marR-type domain is found at 2–135 (ELPLGSDLAR…LALLVSRLEK (134 aa)). A DNA-binding region (H-T-H motif) is located at residues 49 to 72 (QIQLAKAIGIEQPSLVRTLDQLEE).

This sequence belongs to the SlyA family. As to quaternary structure, homodimer.

Functionally, transcription regulator that can specifically activate or repress expression of target genes. Regulates genes involved in production of antibiotic and exoenzyme virulence determinants in the phytopathogen. Required for the expression of the virulence protein evf during Drosophila melanogaster infection. The sequence is that of Transcriptional regulator SlyA from Pectobacterium carotovorum subsp. carotovorum (Erwinia carotovora subsp. carotovora).